The chain runs to 220 residues: Probable chemoreceptor glutamine deamidase CheD 2 (220 aa).

It belongs to the CheD family.

The enzyme catalyses L-glutaminyl-[protein] + H2O = L-glutamyl-[protein] + NH4(+). In terms of biological role, probably deamidates glutamine residues to glutamate on methyl-accepting chemotaxis receptors (MCPs), playing an important role in chemotaxis. This chain is Probable chemoreceptor glutamine deamidase CheD 2, found in Methanosarcina acetivorans (strain ATCC 35395 / DSM 2834 / JCM 12185 / C2A).